Here is a 217-residue protein sequence, read N- to C-terminus: Nucleoside diphosphate-linked moiety X motif 6 (217 aa).

One can recognise a Nudix hydrolase domain in the interval 42-177 (THQVGVAGAV…VAKLLLYGYN (136 aa)). The Nudix box signature appears at 77–98 (GLSDQGEDIGATAVREVLEETG).

The protein belongs to the Nudix hydrolase family. Detected in liver (at protein level).

It localises to the cytoplasm. It is found in the nucleus. The protein resides in the mitochondrion. In terms of biological role, may contribute to the regulation of cell proliferation. This is Nucleoside diphosphate-linked moiety X motif 6 (nudt6) from Xenopus laevis (African clawed frog).